A 161-amino-acid chain; its full sequence is UPF0506 protein SJCHGC02965 (161 aa).

Residues 1–13 (QLLILCLVTVINS) form the signal peptide. N15, N19, N31, N43, N47, N59, N63, N75, and N121 each carry an N-linked (GlcNAc...) asparagine glycan. 3 disulfide bridges follow: C127–C141, C134–C145, and C140–C150.

It belongs to the UPF0506 family.

The protein localises to the secreted. The polypeptide is UPF0506 protein SJCHGC02965 (Schistosoma japonicum (Blood fluke)).